Consider the following 670-residue polypeptide: DNA ligase (670 aa).

NAD(+)-binding positions include 32–36, 81–82, and glutamate 113; these read DAEYD and SL. Lysine 115 (N6-AMP-lysine intermediate) is an active-site residue. The NAD(+) site is built by arginine 136, glutamate 173, lysine 290, and lysine 314. Residues cysteine 406, cysteine 409, cysteine 424, and cysteine 430 each coordinate Zn(2+). The BRCT domain maps to 592 to 670; it reads EIDSPFAGKT…EQEMMRLLGE (79 aa).

This sequence belongs to the NAD-dependent DNA ligase family. LigA subfamily. The cofactor is Mg(2+). Mn(2+) serves as cofactor.

It catalyses the reaction NAD(+) + (deoxyribonucleotide)n-3'-hydroxyl + 5'-phospho-(deoxyribonucleotide)m = (deoxyribonucleotide)n+m + AMP + beta-nicotinamide D-nucleotide.. DNA ligase that catalyzes the formation of phosphodiester linkages between 5'-phosphoryl and 3'-hydroxyl groups in double-stranded DNA using NAD as a coenzyme and as the energy source for the reaction. It is essential for DNA replication and repair of damaged DNA. This chain is DNA ligase, found in Erwinia tasmaniensis (strain DSM 17950 / CFBP 7177 / CIP 109463 / NCPPB 4357 / Et1/99).